The following is a 115-amino-acid chain: Large ribosomal subunit protein bL19 (115 aa).

The protein belongs to the bacterial ribosomal protein bL19 family.

This protein is located at the 30S-50S ribosomal subunit interface and may play a role in the structure and function of the aminoacyl-tRNA binding site. The chain is Large ribosomal subunit protein bL19 (rplS) from Buchnera aphidicola subsp. Acyrthosiphon pisum (strain APS) (Acyrthosiphon pisum symbiotic bacterium).